We begin with the raw amino-acid sequence, 246 residues long: Bis(5'-nucleosyl)-tetraphosphatase PrpE [asymmetrical] (246 aa).

The protein belongs to the PrpE family. The cofactor is Ni(2+).

The enzyme catalyses P(1),P(4)-bis(5'-guanosyl) tetraphosphate + H2O = GMP + GTP + 2 H(+). Functionally, asymmetrically hydrolyzes Ap4p to yield AMP and ATP. This is Bis(5'-nucleosyl)-tetraphosphatase PrpE [asymmetrical] from Halalkalibacterium halodurans (strain ATCC BAA-125 / DSM 18197 / FERM 7344 / JCM 9153 / C-125) (Bacillus halodurans).